Here is a 495-residue protein sequence, read N- to C-terminus: RTALQSGIDKLADAVGLTLGPRGRNVVLDEFGSPKVVNEGVTIARAIELPDPMENAGAALIREVASKTNDSAGDGTTTASVLAREIIKLGLLSVTSGANPVSIKRGIDKTVQGLIEELEKKARPVKGRDDIKAVASISAGNDELIGTMIADAIDKVGPDGVLSIESSSSFETTVEVEEGMEIDRGYISPQFVTNPEKLICEFENARVLVTDQKITAIKDIIPLLEKTTQLRAPLLIIAEDVTGEALATLVVNKMRGILNVAAIKAPGFGERRKALLQDIAILTGAEFQASDLGLLVENTSVEQLGIARKVTITKDSTTLIADAASKDELQARIAQLKRELAETDSVYDSEKLAERIAKLSGGVAVIKVGAATETELEDRKLRIEDAKNATFAAIEEGIVPGGGAALVHLSTVVPAINGEDKDADERLGADILQKALVAPASLIAQNAGIEGEVVVEKVKAREWEIGYNAMTDKYENLVEAGVIDPAKVTRCALQN.

Belongs to the chaperonin (HSP60) family. Oligomer of probably six alpha and six beta subunits.

It is found in the plastid. It localises to the chloroplast. In terms of biological role, this protein binds RuBisCO small and large subunits and is implicated in the assembly of the enzyme oligomer. The sequence is that of RuBisCO large subunit-binding protein subunit alpha from Ricinus communis (Castor bean).